We begin with the raw amino-acid sequence, 822 residues long: Calpain-3 (822 aa).

Positions 1–36 are disordered; the sequence is MPTVISASVAPRTGAEPMSPGPIAQAAQDKGTEAGG. A Calpain catalytic domain is found at 74-418; that stretch reads LFVDPEFPPD…FTKLEICNLT (345 aa). Catalysis depends on residues C129, H335, and N359. The interval 419–587 is domain III; it reads ADALESDKLQ…KRNLSEEVEN (169 aa). The linker stretch occupies residues 588–650; that stretch reads TISVDRPVKK…EPGNTDQESE (63 aa). The tract at residues 604-652 is disordered; that stretch reads IFVSDRANSNKELGVDQETEEGKDNTSPDKQAKSPQLEPGNTDQESEEQ. The span at 623 to 635 shows a compositional bias: basic and acidic residues; that stretch reads EEGKDNTSPDKQA. EF-hand domains follow at residues 650–684, 693–726, 723–758, and 788–822; these read EEQRQFRNIFRQIAGDDMEICADELKNVLNRVVNK, FTLESCRSMIALMDTDGSGRLNLQEFHHLWKKIK, KKIKTWQKIFKHYDTDQSGTINSYEMRNAVKDAGFH, and VRLEGMFRAFNAFDKDGDGIIKLNVLEWLQLTMYA. The segment at 651-822 is domain IV; that stretch reads EQRQFRNIFR…LEWLQLTMYA (172 aa). Ca(2+) is bound by residues A663, D666, E668, E673, D706, D708, S710, R712, E717, D736, D738, S740, T742, E747, D801, D803, D805, and I807.

Belongs to the peptidase C2 family. Homodimer; via EF-hand domain 4. Interacts with TTN/titin. Interacts with CMYA5; this interaction, which results in CMYA5 proteolysis, may protect CAPN3 from autolysis. Interacts with SIMC1. Interacts with UTP25; the interaction is required for CAPN3 translocation to the nucleolus. In terms of tissue distribution, skeletal muscle.

The protein localises to the cytoplasm. It localises to the nucleus. The protein resides in the nucleolus. It carries out the reaction Broad endopeptidase activity.. Activated by micromolar concentrations of calcium and inhibited by calpastatin. Its function is as follows. Calcium-regulated non-lysosomal thiol-protease. Proteolytically cleaves CTBP1. Mediates, with UTP25, the proteasome-independent degradation of p53/TP53. In Bos taurus (Bovine), this protein is Calpain-3 (CAPN3).